Consider the following 409-residue polypeptide: Serine hydroxymethyltransferase (409 aa).

(6S)-5,6,7,8-tetrahydrofolate contacts are provided by residues leucine 116 and 120 to 122 (GHL). Lysine 225 is subject to N6-(pyridoxal phosphate)lysine.

It belongs to the SHMT family. Homodimer. It depends on pyridoxal 5'-phosphate as a cofactor.

The protein resides in the cytoplasm. It carries out the reaction (6R)-5,10-methylene-5,6,7,8-tetrahydrofolate + glycine + H2O = (6S)-5,6,7,8-tetrahydrofolate + L-serine. It functions in the pathway one-carbon metabolism; tetrahydrofolate interconversion. Its pathway is amino-acid biosynthesis; glycine biosynthesis; glycine from L-serine: step 1/1. Functionally, catalyzes the reversible interconversion of serine and glycine with tetrahydrofolate (THF) serving as the one-carbon carrier. This reaction serves as the major source of one-carbon groups required for the biosynthesis of purines, thymidylate, methionine, and other important biomolecules. Also exhibits THF-independent aldolase activity toward beta-hydroxyamino acids, producing glycine and aldehydes, via a retro-aldol mechanism. In Acholeplasma laidlawii (strain PG-8A), this protein is Serine hydroxymethyltransferase.